Here is a 225-residue protein sequence, read N- to C-terminus: Membrane-spanning 4-domains subfamily A member 4D (225 aa).

Residues 1–42 are Cytoplasmic-facing; that stretch reads MQGLAQTTMAVVPGGAPPSENSVIKSQMWNKNKEKFLKGEPK. Residues 43–63 traverse the membrane as a helical segment; it reads VLGAIQVMIAFINFSLGIIII. Topologically, residues 64–73 are extracellular; the sequence is LNRVSERFMS. A helical membrane pass occupies residues 74–94; sequence VLLLAPFWGSIMFIFSGSLSI. Residues 95-113 are Cytoplasmic-facing; it reads AAGVKPTKAMIISSLSVNT. The chain crosses the membrane as a helical span at residues 114–134; that stretch reads ISSVLAVAASIIGVISVISGV. The Extracellular portion of the chain corresponds to 135 to 148; it reads FRQFRSQPAIASLD. A helical transmembrane segment spans residues 149–169; that stretch reads VLMTILNMLEFCIAVSVSAFG. Topologically, residues 170-225 are cytoplasmic; that stretch reads CKASCCNSSEVLVVLPSNSAVTVTAPPMILQPLPPSECQGKNVPENLYRNQPGEIV.

It belongs to the MS4A family. As to expression, expressed in thymus, spleen, peripheral lymph node, liver, kidney, heart, colon, lung, and testes.

It localises to the membrane. Its function is as follows. May be involved in signal transduction as a component of a multimeric receptor complex. The chain is Membrane-spanning 4-domains subfamily A member 4D (Ms4a4d) from Mus musculus (Mouse).